Consider the following 117-residue polypeptide: UPF0251 protein DehaBAV1_0135 (117 aa).

This sequence belongs to the UPF0251 family.

The polypeptide is UPF0251 protein DehaBAV1_0135 (Dehalococcoides mccartyi (strain ATCC BAA-2100 / JCM 16839 / KCTC 5957 / BAV1)).